An 876-amino-acid chain; its full sequence is Alanine--tRNA ligase (876 aa).

The residue at position 74 (lysine 74) is an N6-acetyllysine. Positions 564, 568, 666, and 670 each coordinate Zn(2+).

The protein belongs to the class-II aminoacyl-tRNA synthetase family. Homotetramer. Requires Zn(2+) as cofactor.

It is found in the cytoplasm. It catalyses the reaction tRNA(Ala) + L-alanine + ATP = L-alanyl-tRNA(Ala) + AMP + diphosphate. Functionally, catalyzes the attachment of alanine to tRNA(Ala) in a two-step reaction: alanine is first activated by ATP to form Ala-AMP and then transferred to the acceptor end of tRNA(Ala). Also edits incorrectly charged Ser-tRNA(Ala) and Gly-tRNA(Ala) via its editing domain. The polypeptide is Alanine--tRNA ligase (Escherichia coli O157:H7).